A 96-amino-acid chain; its full sequence is Putative toxin Y4kP (96 aa).

This sequence belongs to the RelE toxin family.

Its function is as follows. Toxic component of a type II toxin-antitoxin (TA) system. The chain is Putative toxin Y4kP from Sinorhizobium fredii (strain NBRC 101917 / NGR234).